The sequence spans 107 residues: MHAKIILALFLGMTAFLAVQADHHHDHGHDDHEHEELTLEKIKEKIKDYADKTPVDQLTERVQAGRDYLLGKGARPSHLPARVDRHLSKLTAAEKQELADYLLTFLH.

Positions 1-21 (MHAKIILALFLGMTAFLAVQA) are cleaved as a signal peptide.

In terms of tissue distribution, coelomic liquid (at protein level). Expressed in large fat cells in contact with coelomic cavities, in intestinal epithelia and at the epidermis level.

It localises to the secreted. Its function is as follows. Has bacteriostatic activity against M.luteus. No activity toward E.coli and F.oxysporum. In Theromyzon tessulatum (Duck leech), this protein is Theromyzin.